Consider the following 136-residue polypeptide: Histone H3.1 (136 aa).

The interval 1–43 (MARTKQTARKSTGGKAPRKQLATKAARKSAPATGGVKKPHRYR) is disordered. Arginine 3 bears the Asymmetric dimethylarginine; by PRMT6; alternate mark. Arginine 3 carries the post-translational modification Citrulline; alternate. Threonine 4 is modified (phosphothreonine; by HASPIN and VRK1). Lysine 5 carries the post-translational modification Allysine; alternate. The residue at position 5 (lysine 5) is an N6,N6,N6-trimethyllysine; alternate. At lysine 5 the chain carries N6,N6-dimethyllysine; alternate. Residue lysine 5 is modified to N6-(2-hydroxyisobutyryl)lysine; alternate. Lysine 5 carries the post-translational modification N6-(beta-hydroxybutyryl)lysine; alternate. Lysine 5 carries the N6-acetyllysine; alternate modification. The residue at position 5 (lysine 5) is an N6-crotonyllysine; alternate. Lysine 5 carries the post-translational modification N6-methyllysine; alternate. Residue glutamine 6 is modified to 5-glutamyl dopamine; alternate. Glutamine 6 carries the post-translational modification 5-glutamyl serotonin; alternate. Threonine 7 carries the post-translational modification Phosphothreonine; by PKC. The residue at position 9 (arginine 9) is a Citrulline; alternate. Arginine 9 carries the symmetric dimethylarginine; by PRMT5; alternate modification. An N6,N6,N6-trimethyllysine; alternate modification is found at lysine 10. Position 10 is an N6,N6-dimethyllysine; alternate (lysine 10). Residue lysine 10 is modified to N6-(2-hydroxyisobutyryl)lysine; alternate. N6-(beta-hydroxybutyryl)lysine; alternate is present on lysine 10. The residue at position 10 (lysine 10) is an N6-acetyllysine; alternate. Lysine 10 carries the post-translational modification N6-crotonyllysine; alternate. At lysine 10 the chain carries N6-methyllysine; alternate. Lysine 10 bears the N6-butyryllysine; alternate mark. Lysine 10 bears the N6-lactoyllysine; alternate mark. ADP-ribosylserine; alternate is present on serine 11. Position 11 is a phosphoserine; alternate; by AURKB, AURKC, RPS6KA3, RPS6KA4 and RPS6KA5 (serine 11). Residue threonine 12 is modified to Phosphothreonine; by PKC and CHEK1. Lysine 15 is subject to N6-(2-hydroxyisobutyryl)lysine; alternate. Lysine 15 carries the N6-(beta-hydroxybutyryl)lysine; alternate modification. Position 15 is an N6-acetyllysine; alternate (lysine 15). Residue lysine 15 is modified to N6-lactoyllysine; alternate. Lysine 15 is subject to N6-glutaryllysine; alternate. Lysine 15 is modified (N6-succinyllysine; alternate). Arginine 18 is modified (citrulline; alternate). Asymmetric dimethylarginine; by CARM1; alternate is present on arginine 18. N6-(2-hydroxyisobutyryl)lysine; alternate occurs at positions 19 and 24. Residues lysine 19 and lysine 24 each carry the N6-(beta-hydroxybutyryl)lysine; alternate modification. An N6-acetyllysine; alternate mark is found at lysine 19 and lysine 24. Lysine 19 and lysine 24 each carry N6-crotonyllysine; alternate. Residues lysine 19 and lysine 24 each carry the N6-methyllysine; alternate modification. 2 positions are modified to N6-butyryllysine; alternate: lysine 19 and lysine 24. Residues lysine 19 and lysine 24 each carry the N6-lactoyllysine; alternate modification. An N6-glutaryllysine; alternate mark is found at lysine 19 and lysine 24. A lipid anchor (N6-decanoyllysine) is attached at lysine 19. A Citrulline modification is found at arginine 27. Lysine 28 carries the N6,N6,N6-trimethyllysine; alternate modification. Lysine 28 carries the post-translational modification N6,N6-dimethyllysine; alternate. Position 28 is an N6-(2-hydroxyisobutyryl)lysine; alternate (lysine 28). Lysine 28 is modified (N6-(beta-hydroxybutyryl)lysine; alternate). Position 28 is an N6-acetyllysine; alternate (lysine 28). Lysine 28 bears the N6-crotonyllysine; alternate mark. Residue lysine 28 is modified to N6-methyllysine; alternate. The residue at position 28 (lysine 28) is an N6-lactoyllysine; alternate. Residue lysine 28 is modified to N6-glutaryllysine; alternate. Residue serine 29 is modified to ADP-ribosylserine; alternate. Serine 29 carries the phosphoserine; alternate; by AURKB, AURKC and RPS6KA5 modification. Lysine 37 carries the N6,N6,N6-trimethyllysine; alternate modification. At lysine 37 the chain carries N6,N6-dimethyllysine; alternate. Residue lysine 37 is modified to N6-(2-hydroxyisobutyryl)lysine; alternate. Lysine 37 carries the post-translational modification N6-acetyllysine; alternate. An N6-methyllysine; alternate modification is found at lysine 37. An N6-methyllysine modification is found at lysine 38. At tyrosine 42 the chain carries Phosphotyrosine. An N6,N6,N6-trimethyllysine; alternate modification is found at lysine 57. The residue at position 57 (lysine 57) is an N6-(2-hydroxyisobutyryl)lysine; alternate. Position 57 is an N6-(beta-hydroxybutyryl)lysine; alternate (lysine 57). Lysine 57 is subject to N6-acetyllysine; alternate. N6-crotonyllysine; alternate is present on lysine 57. At lysine 57 the chain carries N6-lactoyllysine; alternate. Position 57 is an N6-glutaryllysine; alternate (lysine 57). Residue lysine 57 is modified to N6-succinyllysine; alternate. Residue lysine 57 is modified to N6-methyllysine; by EHMT2; alternate. The residue at position 58 (serine 58) is a Phosphoserine. Residues lysine 65 and lysine 80 each carry the N6-(2-hydroxyisobutyryl)lysine; alternate modification. Lysine 65 and lysine 80 each carry N6-methyllysine; alternate. Lysine 80 is subject to N6,N6,N6-trimethyllysine; alternate. Lysine 80 is modified (N6,N6-dimethyllysine; alternate). Lysine 80 carries the post-translational modification N6-(beta-hydroxybutyryl)lysine; alternate. Residue lysine 80 is modified to N6-acetyllysine; alternate. An N6-lactoyllysine; alternate modification is found at lysine 80. Lysine 80 is subject to N6-glutaryllysine; alternate. Lysine 80 bears the N6-succinyllysine; alternate mark. Residue threonine 81 is modified to Phosphothreonine. At serine 87 the chain carries Phosphoserine. Threonine 108 is subject to Phosphothreonine. 2 positions are modified to N6-acetyllysine; alternate: lysine 116 and lysine 123. Lysine 116 and lysine 123 each carry N6-glutaryllysine; alternate. N6-(2-hydroxyisobutyryl)lysine; alternate is present on lysine 123. Lysine 123 is modified (N6-(beta-hydroxybutyryl)lysine; alternate). Lysine 123 is subject to N6-methyllysine; alternate. Lysine 123 carries the N6-succinyllysine; alternate modification.

Belongs to the histone H3 family. The nucleosome is a histone octamer containing two molecules each of H2A, H2B, H3 and H4 assembled in one H3-H4 heterotetramer and two H2A-H2B heterodimers. The octamer wraps approximately 147 bp of DNA. Interacts with TONSL; CHAF1A; CHAF1B; MCM2 and DNAJC9. Interacts with NASP; NASP is a histone chaperone that stabilizes and maintains a soluble pool of Histone H3-H4 dimers. Post-translationally, acetylation is generally linked to gene activation. Acetylation on Lys-10 (H3K9ac) impairs methylation at Arg-9 (H3R8me2s). Acetylation on Lys-19 (H3K18ac) and Lys-24 (H3K24ac) favors methylation at Arg-18 (H3R17me). Acetylation at Lys-123 (H3K122ac) by EP300/p300 plays a central role in chromatin structure: localizes at the surface of the histone octamer and stimulates transcription, possibly by promoting nucleosome instability. In terms of processing, citrullination at Arg-9 (H3R8ci) and/or Arg-18 (H3R17ci) by PADI4 impairs methylation and represses transcription. Asymmetric dimethylation at Arg-18 (H3R17me2a) by CARM1 is linked to gene activation. Symmetric dimethylation at Arg-9 (H3R8me2s) by PRMT5 is linked to gene repression. Asymmetric dimethylation at Arg-3 (H3R2me2a) by PRMT6 is linked to gene repression and is mutually exclusive with H3 Lys-5 methylation (H3K4me2 and H3K4me3). H3R2me2a is present at the 3' of genes regardless of their transcription state and is enriched on inactive promoters, while it is absent on active promoters. Post-translationally, methylation at Lys-5 (H3K4me), Lys-37 (H3K36me) and Lys-80 (H3K79me) are linked to gene activation. Methylation at Lys-5 (H3K4me) facilitates subsequent acetylation of H3 and H4. Methylation at Lys-80 (H3K79me) is associated with DNA double-strand break (DSB) responses and is a specific target for TP53BP1. Methylation at Lys-10 (H3K9me) and Lys-28 (H3K27me) are linked to gene repression. Methylation at Lys-10 (H3K9me) is a specific target for HP1 proteins (CBX1, CBX3 and CBX5) and prevents subsequent phosphorylation at Ser-11 (H3S10ph) and acetylation of H3 and H4. Methylation at Lys-5 (H3K4me) and Lys-80 (H3K79me) require preliminary monoubiquitination of H2B at 'Lys-120'. Methylation at Lys-10 (H3K9me) and Lys-28 (H3K27me) are enriched in inactive X chromosome chromatin. Monomethylation at Lys-57 (H3K56me1) by EHMT2/G9A in G1 phase promotes interaction with PCNA and is required for DNA replication. In terms of processing, phosphorylated at Thr-4 (H3T3ph) by VRK1. Phosphorylated at Thr-4 (H3T3ph) by HASPIN during prophase and dephosphorylated during anaphase. Phosphorylation at Ser-11 (H3S10ph) by AURKB is crucial for chromosome condensation and cell-cycle progression during mitosis and meiosis. In addition phosphorylation at Ser-11 (H3S10ph) by RPS6KA4 and RPS6KA5 is important during interphase because it enables the transcription of genes following external stimulation, like mitogens, stress, growth factors or UV irradiation and result in the activation of genes, such as c-fos and c-jun. Phosphorylation at Ser-11 (H3S10ph), which is linked to gene activation, prevents methylation at Lys-10 (H3K9me) but facilitates acetylation of H3 and H4. Phosphorylation at Ser-11 (H3S10ph) by AURKB mediates the dissociation of HP1 proteins (CBX1, CBX3 and CBX5) from heterochromatin. Phosphorylation at Ser-11 (H3S10ph) is also an essential regulatory mechanism for neoplastic cell transformation. Phosphorylated at Ser-29 (H3S28ph) by MAP3K20 isoform 1, RPS6KA5 or AURKB during mitosis or upon ultraviolet B irradiation. Phosphorylation at Thr-7 (H3T6ph) by PRKCB is a specific tag for epigenetic transcriptional activation that prevents demethylation of Lys-5 (H3K4me) by LSD1/KDM1A. At centromeres, specifically phosphorylated at Thr-12 (H3T11ph) from prophase to early anaphase, by DAPK3 and PKN1. Phosphorylation at Thr-12 (H3T11ph) by PKN1 or isoform M2 of PKM (PKM2) is a specific tag for epigenetic transcriptional activation that promotes demethylation of Lys-10 (H3K9me) by KDM4C/JMJD2C. Phosphorylation at Thr-12 (H3T11ph) by chromatin-associated CHEK1 regulates the transcription of cell cycle regulatory genes by modulating acetylation of Lys-10 (H3K9ac). Phosphorylation at Tyr-42 (H3Y41ph) by JAK2 promotes exclusion of CBX5 (HP1 alpha) from chromatin. Monoubiquitinated by RAG1 in lymphoid cells, monoubiquitination is required for V(D)J recombination. Ubiquitinated by the CUL4-DDB-RBX1 complex in response to ultraviolet irradiation. This may weaken the interaction between histones and DNA and facilitate DNA accessibility to repair proteins. Post-translationally, lysine deamination at Lys-5 (H3K4all) to form allysine is mediated by LOXL2. Allysine formation by LOXL2 only takes place on H3K4me3 and results in gene repression. In terms of processing, crotonylation (Kcr) is specifically present in male germ cells and marks testis-specific genes in post-meiotic cells, including X-linked genes that escape sex chromosome inactivation in haploid cells. Crotonylation marks active promoters and enhancers and confers resistance to transcriptional repressors. It is also associated with post-meiotically activated genes on autosomes. Butyrylation of histones marks active promoters and competes with histone acetylation. It is present during late spermatogenesis. Post-translationally, succinylation at Lys-80 (H3K79succ) by KAT2A takes place with a maximum frequency around the transcription start sites of genes. It gives a specific tag for epigenetic transcription activation. Desuccinylation at Lys-123 (H3K122succ) by SIRT7 in response to DNA damage promotes chromatin condensation and double-strand breaks (DSBs) repair. In terms of processing, serine ADP-ribosylation by PARP1 or PARP2 constitutes the primary form of ADP-ribosylation of proteins in response to DNA damage. Serine ADP-ribosylation at Ser-11 (H3S10ADPr) promotes recruitment of CHD1L. H3S10ADPr is mutually exclusive with phosphorylation at Ser-11 (H3S10ph) and impairs acetylation at Lys-10 (H3K9ac). Serotonylated by TGM2 at Gln-6 (H3Q5ser) during serotonergic neuron differentiation. H3Q5ser is associated with trimethylation of Lys-5 (H3K4me3) and enhances general transcription factor IID (TFIID) complex-binding to H3K4me3, thereby facilitating transcription. Post-translationally, dopaminylated by TGM2 at Gln-6 (H3Q5dop) in ventral tegmental area (VTA) neurons. H3Q5dop mediates neurotransmission-independent role of nuclear dopamine by regulating relapse-related transcriptional plasticity in the reward system. In terms of processing, lactylated in macrophages by EP300/P300 by using lactoyl-CoA directly derived from endogenous or exogenous lactate, leading to stimulates gene transcription.

The protein resides in the nucleus. It localises to the chromosome. Functionally, core component of nucleosome. Nucleosomes wrap and compact DNA into chromatin, limiting DNA accessibility to the cellular machineries which require DNA as a template. Histones thereby play a central role in transcription regulation, DNA repair, DNA replication and chromosomal stability. DNA accessibility is regulated via a complex set of post-translational modifications of histones, also called histone code, and nucleosome remodeling. In Homo sapiens (Human), this protein is Histone H3.1.